Here is a 137-residue protein sequence, read N- to C-terminus: Large ribosomal subunit protein uL16 (137 aa).

This sequence belongs to the universal ribosomal protein uL16 family. Part of the 50S ribosomal subunit.

Its function is as follows. Binds 23S rRNA and is also seen to make contacts with the A and possibly P site tRNAs. The protein is Large ribosomal subunit protein uL16 of Streptococcus mutans serotype c (strain ATCC 700610 / UA159).